Consider the following 221-residue polypeptide: Alpha-ketoglutarate-dependent dioxygenase alkB homolog 7, mitochondrial (221 aa).

The transit peptide at methionine 1–alanine 23 directs the protein to the mitochondrion. Residues histidine 121 and aspartate 123 each coordinate Fe cation. Tyrosine 165 is a 2-oxoglutarate binding site. Histidine 177 contributes to the Fe cation binding site. 2-oxoglutarate contacts are provided by residues arginine 197–serine 199 and arginine 203.

This sequence belongs to the alkB family. Fe(2+) is required as a cofactor.

Its subcellular location is the mitochondrion matrix. In terms of biological role, may function as protein hydroxylase; can catalyze auto-hydroxylation at Leu-110 (in vitro), but this activity may be due to the absence of the true substrate. Required to induce programmed necrosis in response to DNA damage caused by cytotoxic alkylating agents. Acts by triggering the collapse of mitochondrial membrane potential and loss of mitochondrial function that leads to energy depletion and cell death. ALKBH7-mediated necrosis is probably required to prevent the accumulation of cells with DNA damage. Does not display DNA demethylase activity. Involved in fatty acid metabolism. The chain is Alpha-ketoglutarate-dependent dioxygenase alkB homolog 7, mitochondrial (ALKBH7) from Bos taurus (Bovine).